A 314-amino-acid chain; its full sequence is Aspartate carbamoyltransferase catalytic subunit (314 aa).

The carbamoyl phosphate site is built by Arg-64 and Thr-65. Lys-92 contributes to the L-aspartate binding site. Residues Arg-114, His-142, and Gln-145 each coordinate carbamoyl phosphate. L-aspartate is bound by residues Arg-175 and Arg-230. Carbamoyl phosphate-binding residues include Gly-271 and Pro-272.

It belongs to the aspartate/ornithine carbamoyltransferase superfamily. ATCase family. Heterododecamer (2C3:3R2) of six catalytic PyrB chains organized as two trimers (C3), and six regulatory PyrI chains organized as three dimers (R2).

The enzyme catalyses carbamoyl phosphate + L-aspartate = N-carbamoyl-L-aspartate + phosphate + H(+). It functions in the pathway pyrimidine metabolism; UMP biosynthesis via de novo pathway; (S)-dihydroorotate from bicarbonate: step 2/3. Catalyzes the condensation of carbamoyl phosphate and aspartate to form carbamoyl aspartate and inorganic phosphate, the committed step in the de novo pyrimidine nucleotide biosynthesis pathway. The chain is Aspartate carbamoyltransferase catalytic subunit from Deinococcus radiodurans (strain ATCC 13939 / DSM 20539 / JCM 16871 / CCUG 27074 / LMG 4051 / NBRC 15346 / NCIMB 9279 / VKM B-1422 / R1).